A 491-amino-acid polypeptide reads, in one-letter code: Glutamyl-tRNA(Gln) amidotransferase subunit A (491 aa).

Residues Lys77 and Ser152 each act as charge relay system in the active site. Ser176 acts as the Acyl-ester intermediate in catalysis.

It belongs to the amidase family. GatA subfamily. In terms of assembly, heterotrimer of A, B and C subunits.

The catalysed reaction is L-glutamyl-tRNA(Gln) + L-glutamine + ATP + H2O = L-glutaminyl-tRNA(Gln) + L-glutamate + ADP + phosphate + H(+). Allows the formation of correctly charged Gln-tRNA(Gln) through the transamidation of misacylated Glu-tRNA(Gln) in organisms which lack glutaminyl-tRNA synthetase. The reaction takes place in the presence of glutamine and ATP through an activated gamma-phospho-Glu-tRNA(Gln). The chain is Glutamyl-tRNA(Gln) amidotransferase subunit A from Chlamydia felis (strain Fe/C-56) (Chlamydophila felis).